The sequence spans 337 residues: Biotin synthase (337 aa).

The Radical SAM core domain maps to 52–281 (ADIQRASLLS…RSRVRLSAGR (230 aa)). Residues cysteine 67, cysteine 71, and cysteine 74 each coordinate [4Fe-4S] cluster. Cysteine 112, cysteine 144, cysteine 204, and arginine 276 together coordinate [2Fe-2S] cluster.

This sequence belongs to the radical SAM superfamily. Biotin synthase family. In terms of assembly, homodimer. [4Fe-4S] cluster serves as cofactor. The cofactor is [2Fe-2S] cluster.

The catalysed reaction is (4R,5S)-dethiobiotin + (sulfur carrier)-SH + 2 reduced [2Fe-2S]-[ferredoxin] + 2 S-adenosyl-L-methionine = (sulfur carrier)-H + biotin + 2 5'-deoxyadenosine + 2 L-methionine + 2 oxidized [2Fe-2S]-[ferredoxin]. The protein operates within cofactor biosynthesis; biotin biosynthesis; biotin from 7,8-diaminononanoate: step 2/2. Functionally, catalyzes the conversion of dethiobiotin (DTB) to biotin by the insertion of a sulfur atom into dethiobiotin via a radical-based mechanism. This chain is Biotin synthase, found in Methylobacterium radiotolerans (strain ATCC 27329 / DSM 1819 / JCM 2831 / NBRC 15690 / NCIMB 10815 / 0-1).